We begin with the raw amino-acid sequence, 532 residues long: MFTDLLHSSYFSLFLIVALGFMLGRIKIKGLSLDVSAVIFIALLFGHFGVIIPKELGNFGLVLFIFTIGIQAGPGFFDSFRSKGKTLILITMLIICSACLTAVGLKYAFDIDTPSVVGLIAGALTSTPGLAVAIDSTHSPLASIAYGIAYPFGVIGVILFVKLLPKIMRVNLDQEARRLEIERRGQFPELGTCIYRVTNASVFNRSLMQINARAMTGAVISRLKHKDEISIPTAHTVLHEGDYIQAVGSEESLNQLSVLIGEREEGELPLDKTQEIESLLLTKKDMINKQLGDLNLQKNFGCTVTRVRRSGIDLSPSPDLALKFGDKLMVVGEKEGIKGVARLLGNNAKKLSDTDFFPIAMGIVLGVLFGKLNISFSDTLSFSPGLTGGVLMVALVLSAVGKTGPIIWSMSGPANQLLRQLGLLLFLAEVGTSAGKNLVATFQESGLLMFGVGAAITVVPMLVAVIVGRLVFKINILDLLGTITGGMTSTPGLAAADSMVDSNIPSVAYATVYPIAMVFLILFIQVISSAVY.

The next 6 helical transmembrane spans lie at 7–26 (HSSYFSLFLIVALGFMLGRI), 30–52 (GLSLDVSAVIFIALLFGHFGVII), 59–77 (FGLVLFIFTIGIQAGPGFF), 87–109 (LILITMLIICSACLTAVGLKYAF), 116–134 (VVGLIAGALTSTPGLAVAI), and 139–161 (SPLASIAYGIAYPFGVIGVILFV). RCK C-terminal domains lie at 179-262 (LEIE…LIGE) and 263-346 (REEG…LLGN). 6 helical membrane-spanning segments follow: residues 356-376 (FFPIAMGIVLGVLFGKLNISF), 386-408 (LTGGVLMVALVLSAVGKTGPIIW), 421-440 (LGLLLFLAEVGTSAGKNLVA), 445-467 (SGLLMFGVGAAITVVPMLVAVIV), 474-496 (INILDLLGTITGGMTSTPGLAAA), and 506-528 (SVAYATVYPIAMVFLILFIQVIS).

This sequence belongs to the AAE transporter (TC 2.A.81) family.

The protein localises to the cell membrane. This is an uncharacterized protein from Bacteroides thetaiotaomicron (strain ATCC 29148 / DSM 2079 / JCM 5827 / CCUG 10774 / NCTC 10582 / VPI-5482 / E50).